The chain runs to 177 residues: Adenine phosphoribosyltransferase (177 aa).

It belongs to the purine/pyrimidine phosphoribosyltransferase family. As to quaternary structure, homodimer.

It localises to the cytoplasm. It catalyses the reaction AMP + diphosphate = 5-phospho-alpha-D-ribose 1-diphosphate + adenine. Its pathway is purine metabolism; AMP biosynthesis via salvage pathway; AMP from adenine: step 1/1. In terms of biological role, catalyzes a salvage reaction resulting in the formation of AMP, that is energically less costly than de novo synthesis. This Rhodococcus jostii (strain RHA1) protein is Adenine phosphoribosyltransferase.